The primary structure comprises 679 residues: Glycine--tRNA ligase beta subunit (679 aa).

Belongs to the class-II aminoacyl-tRNA synthetase family. Tetramer of two alpha and two beta subunits.

The protein resides in the cytoplasm. The enzyme catalyses tRNA(Gly) + glycine + ATP = glycyl-tRNA(Gly) + AMP + diphosphate. This Thermodesulfovibrio yellowstonii (strain ATCC 51303 / DSM 11347 / YP87) protein is Glycine--tRNA ligase beta subunit.